A 124-amino-acid polypeptide reads, in one-letter code: Large ribosomal subunit protein bL12 (124 aa).

This sequence belongs to the bacterial ribosomal protein bL12 family. In terms of assembly, homodimer. Part of the ribosomal stalk of the 50S ribosomal subunit. Forms a multimeric L10(L12)X complex, where L10 forms an elongated spine to which 2 to 4 L12 dimers bind in a sequential fashion. Binds GTP-bound translation factors.

Its function is as follows. Forms part of the ribosomal stalk which helps the ribosome interact with GTP-bound translation factors. Is thus essential for accurate translation. In Azobacteroides pseudotrichonymphae genomovar. CFP2, this protein is Large ribosomal subunit protein bL12.